The primary structure comprises 433 residues: Enolase (433 aa).

Residue glutamine 167 coordinates (2R)-2-phosphoglycerate. Catalysis depends on glutamate 209, which acts as the Proton donor. Aspartate 246, glutamate 291, and aspartate 318 together coordinate Mg(2+). Positions 343, 372, 373, and 394 each coordinate (2R)-2-phosphoglycerate. Lysine 343 serves as the catalytic Proton acceptor.

This sequence belongs to the enolase family. As to quaternary structure, component of the RNA degradosome, a multiprotein complex involved in RNA processing and mRNA degradation. Mg(2+) serves as cofactor.

It is found in the cytoplasm. The protein localises to the secreted. The protein resides in the cell surface. It carries out the reaction (2R)-2-phosphoglycerate = phosphoenolpyruvate + H2O. The protein operates within carbohydrate degradation; glycolysis; pyruvate from D-glyceraldehyde 3-phosphate: step 4/5. Catalyzes the reversible conversion of 2-phosphoglycerate (2-PG) into phosphoenolpyruvate (PEP). It is essential for the degradation of carbohydrates via glycolysis. This chain is Enolase, found in Histophilus somni (strain 129Pt) (Haemophilus somnus).